The sequence spans 258 residues: Thiamine thiazole synthase (258 aa).

Residues serine 36, 55–56 (ER), glycine 63, isoleucine 127, and 153–155 (HVD) contribute to the NAD(+) site. Aspartate 155 and histidine 170 together coordinate Fe cation. Methionine 224 is a binding site for NAD(+). Glycine is bound at residue arginine 234.

It belongs to the THI4 family. As to quaternary structure, homooctamer; tetramer of dimers. The cofactor is Fe(2+).

It carries out the reaction hydrogen sulfide + glycine + NAD(+) = ADP-5-ethyl-4-methylthiazole-2-carboxylate + nicotinamide + 3 H2O + H(+). The protein operates within cofactor biosynthesis; thiamine diphosphate biosynthesis. Involved in the biosynthesis of the thiazole moiety of thiamine. Catalyzes the conversion of NAD and glycine to adenosine diphosphate 5-(2-hydroxyethyl)-4-methylthiazole-2-carboxylate (ADT), an adenylated thiazole intermediate, using free sulfide as a source of sulfur. The sequence is that of Thiamine thiazole synthase from Methanothermobacter thermautotrophicus (strain ATCC 29096 / DSM 1053 / JCM 10044 / NBRC 100330 / Delta H) (Methanobacterium thermoautotrophicum).